The primary structure comprises 849 residues: Putative respiratory burst oxidase homolog protein G (849 aa).

Positions 1 to 17 are enriched in basic and acidic residues; it reads MQRVSFEVKDTEAEKSS. The disordered stretch occupies residues 1-53; it reads MQRVSFEVKDTEAEKSSSEILSGSLPSTYRNPAMENVGNAVDDGSSVKNNPKL. The Cytoplasmic portion of the chain corresponds to 1–303; the sequence is MQRVSFEVKD…RFFVLDSWQR (303 aa). Residues 18–27 are compositionally biased toward low complexity; that stretch reads SEILSGSLPS. EF-hand-like stretches follow at residues 118–128 and 153–164; these read TANTDGLLLRS and SHLKGDVITETE. 2 EF-hand domains span residues 176–211 and 220–255; these read SFDS…SSSA and KADE…AETK. Residues Asp189, Asp191, Asp193, Arg195, and Glu200 each coordinate Ca(2+). Ser270 is modified (phosphoserine). A helical transmembrane segment spans residues 304 to 324; sequence VWVIALWLTIMAILFAYKYIQ. Topologically, residues 325–392 are extracellular; the sequence is YKNRAVYEVL…LNFHKVIAVG (68 aa). The Ferric oxidoreductase domain maps to 342 to 502; it reads KGAAETLKLN…LFVIVYILLV (161 aa). A helical membrane pass occupies residues 393–409; the sequence is IAIGVAIHSVSHLACDF. Over 410–444 the chain is Cytoplasmic; sequence PLLIAATPAEYMPLGKFFGEEQPKRYLHFVKSTEG. The chain crosses the membrane as a helical span at residues 445 to 465; the sequence is ITGLVMVFLMVIAFTLAMPWF. Residues 466–489 are Extracellular-facing; it reads RRGKLEKKLPGPLKKLASFNAFWY. A helical membrane pass occupies residues 490-510; the sequence is THHLFVIVYILLVLHGYYIYL. At 511–518 the chain is on the cytoplasmic side; the sequence is NKEWYKKT. A helical transmembrane segment spans residues 519 to 536; that stretch reads TWMYLAVPVALYAYERLI. Residues 537-659 are Extracellular-facing; it reads RAFRSSIRTV…PYGAPAQDYK (123 aa). In terms of domain architecture, FAD-binding FR-type spans 541 to 657; sequence SSIRTVKVLK…DGPYGAPAQD (117 aa). Residues 660–680 traverse the membrane as a helical segment; sequence KYEVVLLIGLGIGATPMISII. The Cytoplasmic portion of the chain corresponds to 681-849; that stretch reads KDIINNTETK…TRFSFHKENF (169 aa).

Belongs to the RBOH (TC 5.B.1.3) family. In terms of assembly, monomer and homodimer.

It localises to the membrane. Its function is as follows. Calcium-dependent NADPH oxidase that generates superoxide. This chain is Putative respiratory burst oxidase homolog protein G (RBOHG), found in Arabidopsis thaliana (Mouse-ear cress).